The primary structure comprises 559 residues: NAD-dependent malic enzyme 2 (559 aa).

The Proton donor role is filled by Tyr98. NAD(+) is bound at residue Arg151. Residue Lys169 is the Proton acceptor of the active site. 3 residues coordinate a divalent metal cation: Glu240, Asp241, and Asp264. The NAD(+) site is built by Asp264 and Asn413.

This sequence belongs to the malic enzymes family. In terms of assembly, homotetramer. It depends on Mg(2+) as a cofactor. Mn(2+) serves as cofactor.

It catalyses the reaction (S)-malate + NAD(+) = pyruvate + CO2 + NADH. It carries out the reaction oxaloacetate + H(+) = pyruvate + CO2. The polypeptide is NAD-dependent malic enzyme 2 (Vibrio vulnificus (strain YJ016)).